We begin with the raw amino-acid sequence, 375 residues long: Serpentine receptor class alpha-39 (375 aa).

7 consecutive transmembrane segments (helical) span residues 17 to 37 (LFAI…LFII), 51 to 71 (LVFL…LTAW), 99 to 119 (IRGT…GILL), 138 to 158 (LGTI…FILL), 183 to 203 (VYVM…VHLV), 236 to 256 (TPLL…VSVF), and 275 to 295 (LFIM…ELWL).

Belongs to the nematode receptor-like protein sra family.

Its subcellular location is the membrane. The sequence is that of Serpentine receptor class alpha-39 (sra-39) from Caenorhabditis elegans.